A 949-amino-acid polypeptide reads, in one-letter code: Protocadherin alpha-11 (949 aa).

The signal sequence occupies residues 1–29; sequence MFGFQRRGLGTPRLQLWLLLLEFWEVGSG. Cadherin domains lie at 30–133, 157–242, 243–349, 350–454, 455–564, and 580–677; these read QLHY…PPVF, ASDA…DPDF, DKSE…SPEV, AVTS…APAF, AQPE…APAL, and VPRS…APKA. The Extracellular segment spans residues 30–696; the sequence is QLHYSVSEEA…SPEAALVDVN (667 aa). N-linked (GlcNAc...) asparagine glycosylation is found at asparagine 265 and asparagine 304. A glycan (N-linked (GlcNAc...) asparagine) is linked at asparagine 547. Residues 697-717 traverse the membrane as a helical segment; that stretch reads VYLIIAICVVSSLLVLTLLLY. Residues 718–949 lie on the Cytoplasmic side of the membrane; it reads TALWCSATPT…GNSTTDNSDQ (232 aa). PXXP repeat units lie at residues 733–736 and 773–776; these read PGKP and PSLP. The segment at 733-893 is 6 X 4 AA repeats of P-X-X-P; that stretch reads PGKPTLVCSR…PDKFIIPGSP (161 aa). Disordered regions lie at residues 753–807, 826–858, and 870–889; these read RRQR…DWRY, ILRA…PPVG, and YGPG…KFII. Residues 780-789 are compositionally biased toward basic and acidic residues; that stretch reads NKEEEGERQE. 4 PXXP repeats span residues 795–798, 831–834, 872–875, and 890–893; these read PGQP, PGGP, PGNP, and PGSP. Positions 900–949 are disordered; it reads QEPANSQIDKSDFITFGKKEETKKKKKKKKGNKTQEKKEKGNSTTDNSDQ. A compositionally biased stretch (basic and acidic residues) spans 908–922; the sequence is DKSDFITFGKKEETK.

It is found in the cell membrane. In terms of biological role, potential calcium-dependent cell-adhesion protein. May be involved in the establishment and maintenance of specific neuronal connections in the brain. In Pan troglodytes (Chimpanzee), this protein is Protocadherin alpha-11 (PCDHA11).